The chain runs to 511 residues: 2,3-bisphosphoglycerate-independent phosphoglycerate mutase (511 aa).

Positions 12 and 62 each coordinate Mn(2+). The active-site Phosphoserine intermediate is Ser-62. Substrate is bound by residues His-123, 152–153 (RD), Arg-184, Arg-190, 259–262 (RADR), and Lys-333. Residues Asp-401, His-405, Asp-442, His-443, and His-460 each contribute to the Mn(2+) site.

Belongs to the BPG-independent phosphoglycerate mutase family. As to quaternary structure, monomer. Mn(2+) serves as cofactor.

It catalyses the reaction (2R)-2-phosphoglycerate = (2R)-3-phosphoglycerate. It participates in carbohydrate degradation; glycolysis; pyruvate from D-glyceraldehyde 3-phosphate: step 3/5. Its function is as follows. Catalyzes the interconversion of 2-phosphoglycerate and 3-phosphoglycerate. The sequence is that of 2,3-bisphosphoglycerate-independent phosphoglycerate mutase from Nitratidesulfovibrio vulgaris (strain ATCC 29579 / DSM 644 / CCUG 34227 / NCIMB 8303 / VKM B-1760 / Hildenborough) (Desulfovibrio vulgaris).